A 175-amino-acid chain; its full sequence is Adenine phosphoribosyltransferase (175 aa).

This sequence belongs to the purine/pyrimidine phosphoribosyltransferase family. Homodimer.

The protein localises to the cytoplasm. It carries out the reaction AMP + diphosphate = 5-phospho-alpha-D-ribose 1-diphosphate + adenine. It participates in purine metabolism; AMP biosynthesis via salvage pathway; AMP from adenine: step 1/1. Functionally, catalyzes a salvage reaction resulting in the formation of AMP, that is energically less costly than de novo synthesis. In Nitrosospira multiformis (strain ATCC 25196 / NCIMB 11849 / C 71), this protein is Adenine phosphoribosyltransferase.